Consider the following 526-residue polypeptide: Reticulocyte-binding protein homolog 5 (526 aa).

The signal sequence occupies residues 1 to 24 (MIRIKKKLILTIIYIHLFILNRLS). Residues 33 to 51 (KNQENNLTLLPIKSTEEEK) are mediates interaction with human BSG. N38 and N214 each carry an N-linked (GlcNAc...) asparagine glycan. Intrachain disulfides connect C224-C317 and C345-C351. A compositionally biased stretch (acidic residues) spans 259 to 279 (EIDDKSEETDDETEEVEDSIQ). A disordered region spans residues 259-294 (EIDDKSEETDDETEEVEDSIQDTDSNHTPSNKKKND). N297 carries N-linked (GlcNAc...) asparagine glycosylation.

Forms a complex composed of RH5, P113 and human BSG/basigin; the complex bridges the merozoite and host erythrocyte membranes. Within the complex, interacts (via C-terminus) with human BSG/basigin isoform 2 (via the extracellular domain); the interaction is independent of BSG glycosylation status. Weakly interacts with P.troglodytes BSG but not with G.gorilla BSG. Also, interacts (via N-terminus) with P113; the interaction tethers RH5 to the merozoite membrane. Component of the PfRH5 adhesion complex composed of 1 copy of CyRPA, RH5 and RIPR; the complex is formed during merozoite invasion of host erythrocytes specifically at the interface between the parasite and host membranes. Within the complex, interacts with CyRPA. CyRPA recruits RIPR to the RH5-P113-BSG complex; the formation of the PfRH5 adhesion complex increases the affinity of RH5 for BSG and probably leads to the release of RH5 from P113 while maintaining the interaction of the PfRH5 adhesion complex with BSG. Post-translationally, cleaved into a 45kDa form during merozoite invasion of host erythrocyte.

The protein resides in the secreted. Its subcellular location is the cytoplasmic vesicle. The protein localises to the secretory vesicle. It is found in the rhoptry lumen. It localises to the host cell membrane. In terms of biological role, essential for the invasion of host erythrocytes by blood stage merozoites. By binding P113 at the surface of the merozoite and human BSG/basigin on the erythrocyte membrane, leads to the establishment of a tight junction between the merozoite and host erythrocyte membranes. In addition, the interaction with BSG results in BSG dimerization which triggers an increase in intracellular Ca(2+) in the erythrocyte. This essential step leads to a rearrangement of the erythrocyte cytoskeleton required for the merozoite invasion. In Plasmodium falciparum (isolate 3D7), this protein is Reticulocyte-binding protein homolog 5.